We begin with the raw amino-acid sequence, 319 residues long: Curved DNA-binding protein (319 aa).

One can recognise a J domain in the interval 5–69 (DYYKILGVEP…QKRAEFDEIR (65 aa)).

It localises to the cytoplasm. The protein resides in the nucleoid. Its function is as follows. DNA-binding protein that preferentially recognizes a curved DNA sequence. It is probably a functional analog of DnaJ; displays overlapping activities with DnaJ, but functions under different conditions, probably acting as a molecular chaperone in an adaptive response to environmental stresses other than heat shock. Lacks autonomous chaperone activity; binds native substrates and targets them for recognition by DnaK. Its activity is inhibited by the binding of CbpM. This Pseudomonas putida (strain ATCC 47054 / DSM 6125 / CFBP 8728 / NCIMB 11950 / KT2440) protein is Curved DNA-binding protein.